Here is a 2725-residue protein sequence, read N- to C-terminus: Teneurin-1 (2725 aa).

The disordered stretch occupies residues 1–48 (MEQTDCKPYQPLPKVKHEMDLAYTSSSDESEDGRKPRQSYNSRETLHE). The Teneurin N-terminal domain occupies 1–318 (MEQTDCKPYQ…KPYRCCNWKC (318 aa)). At 1–324 (MEQTDCKPYQ…NWKCTALSAT (324 aa)) the chain is on the cytoplasmic side. A Nuclear localization signal (NLS) motif is present at residues 62–65 (RKRK). Ser-105 bears the Phosphoserine mark. The residue at position 109 (Thr-109) is a Phosphothreonine. Ser-116 is subject to Phosphoserine. The segment covering 174 to 189 (AGSTQDVQSSPHNQFT) has biased composition (polar residues). Positions 174-241 (AGSTQDVQSS…PAPPTSTQDS (68 aa)) are disordered. The segment covering 192-201 (PLPPPPPPPH) has biased composition (pro residues). A Required for interaction with SORBS1 (Ten-1 ICD form) motif is present at residues 290–297 (PPPRPLPR). Residues 325 to 345 (AITVTLALLLAYVIAVHLFGL) traverse the membrane as a helical segment. Over 346 to 2725 (TWQLQPVEGE…FMRQSEIGRR (2380 aa)) the chain is Extracellular. An N-linked (GlcNAc...) asparagine glycan is attached at Asn-433. EGF-like domains are found at residues 528 to 559 (IMDD…PDCA), 560 to 591 (RDSC…ECDV), 592 to 624 (PEEQ…EICE), 625 to 657 (EEDC…NCET), 658 to 691 (PLPV…SDCS), 692 to 721 (TELC…GPTC), 722 to 753 (EERS…DHCT), and 761 to 796 (VRDG…TGCN). Intrachain disulfides connect Cys-532–Cys-542, Cys-536–Cys-547, Cys-549–Cys-558, Cys-567–Cys-578, Cys-580–Cys-589, Cys-596–Cys-607, Cys-601–Cys-612, Cys-614–Cys-623, Cys-628–Cys-639, Cys-633–Cys-644, Cys-646–Cys-655, Cys-666–Cys-679, Cys-681–Cys-690, Cys-695–Cys-705, Cys-699–Cys-710, Cys-712–Cys-721, Cys-726–Cys-736, Cys-730–Cys-741, Cys-743–Cys-752, Cys-765–Cys-775, Cys-769–Cys-784, and Cys-786–Cys-795. 2 N-linked (GlcNAc...) asparagine glycosylation sites follow: Asn-905 and Asn-1084. NHL repeat units lie at residues 1194–1219 (LFAP…VRRI), 1292–1336 (SHCG…NAVI), 1351–1402 (LSCD…IAGR), 1414–1458 (FLVS…VTTN), and 1481–1524 (CFSG…ISRN). A YD 1 repeat occupies 1534 to 1553 (YEIASPADQELYQFTVNGTH). N-linked (GlcNAc...) asparagine glycosylation is found at Asn-1550 and Asn-1567. YD repeat units follow at residues 1570–1590 (YNSE…VHIR), 1608–1632 (YWLT…ALMT), 1633–1654 (YPGN…TVYE), and 1655–1675 (YDPE…SSFH). Residues Asn-1663, Asn-1699, Asn-1757, Asn-1781, and Asn-1842 are each glycosylated (N-linked (GlcNAc...) asparagine). YD repeat units lie at residues 1845–1864 (YSPS…EKME), 1865–1885 (YDQS…WSYT), 1886–1904 (YLEK…YIFE), 1905–1925 (YDQP…HSLQ), 1933–1949 (YRNI…FIQD), 1950–1969 (YSRD…RRVL), 1970–1989 (YKYT…TQVT), 1992–2012 (YEES…FICT), 2015–2035 (YRQT…EGLV), 2085–2105 (YDLN…FSAN), and 2113–2133 (YEIL…VGRM). A glycan (N-linked (GlcNAc...) asparagine) is linked at Asn-2145. YD repeat units follow at residues 2153-2173 (YDAD…WRYS), 2174-2194 (YDLN…LTPL), 2196-2216 (YDLR…DEDG), 2228-2248 (YNSN…TVQY), and 2250-2270 (YDGL…LQFF). Asn-2285 carries N-linked (GlcNAc...) asparagine glycosylation. YD repeat units lie at residues 2296–2313 (YDLQ…GEEY) and 2314–2337 (YVAC…IKEI). A Phosphoserine modification is found at Ser-2580. A glycan (N-linked (GlcNAc...) asparagine) is linked at Asn-2602.

The protein belongs to the tenascin family. Teneurin subfamily. In terms of assembly, homodimer; disulfide-linked. Heterodimer with either TENM2 or TENM3. May also form heterodimer with TENM4. Ten-1 ICD interacts with SORBS1 (via third SH3 domain). Interacts with MBD1. Ten-1 ICD interacts with HINT1. Post-translationally, derives from the plasma membrane form by proteolytic processing. Further proteolytic cleavage may be generated. In terms of tissue distribution, expressed in fetal brain.

The protein localises to the cell membrane. The protein resides in the nucleus. It localises to the nucleus speckle. Its subcellular location is the nucleus matrix. It is found in the cytoplasm. The protein localises to the cytoskeleton. Its function is as follows. Involved in neural development, regulating the establishment of proper connectivity within the nervous system. May function as a cellular signal transducer. Functionally, plays a role in the regulation of neuroplasticity in the limbic system. Mediates a rapid reorganization of actin- and tubulin-based cytoskeleton elements with an increase in dendritic arborization and spine density formation of neurons in the hippocampus and amygdala. Induces BDNF transcription inhibition in neurons. Activates the mitogen-activated protein (MAP) kinase 2 (MEK2) and extracellular signal-regulated kinase (ERK) cascade. Also acts as a bioactive neuroprotective peptide on limbic neurons of the brain and regulates stress-induced behavior: attenuates alkalosis-associated necrotic cell death and the effects of corticotropin-releasing factor (CRF) on c-fos/FOS induction and on the reinstatement of cocaine seeking. In terms of biological role, induces gene transcription activation. The protein is Teneurin-1 (TENM1) of Homo sapiens (Human).